The chain runs to 214 residues: Probable transaldolase (214 aa).

Lysine 83 functions as the Schiff-base intermediate with substrate in the catalytic mechanism.

Belongs to the transaldolase family. Type 3B subfamily.

Its subcellular location is the cytoplasm. It catalyses the reaction D-sedoheptulose 7-phosphate + D-glyceraldehyde 3-phosphate = D-erythrose 4-phosphate + beta-D-fructose 6-phosphate. The protein operates within carbohydrate degradation; pentose phosphate pathway; D-glyceraldehyde 3-phosphate and beta-D-fructose 6-phosphate from D-ribose 5-phosphate and D-xylulose 5-phosphate (non-oxidative stage): step 2/3. In terms of biological role, transaldolase is important for the balance of metabolites in the pentose-phosphate pathway. This Streptococcus equi subsp. equi (strain 4047) protein is Probable transaldolase.